A 66-amino-acid polypeptide reads, in one-letter code: Large ribosomal subunit protein bL33c (66 aa).

It belongs to the bacterial ribosomal protein bL33 family.

Its subcellular location is the plastid. The protein localises to the chloroplast. The sequence is that of Large ribosomal subunit protein bL33c from Lepidium virginicum (Virginia pepperweed).